A 307-amino-acid chain; its full sequence is Taste receptor type 2 member 10 (307 aa).

The Extracellular portion of the chain corresponds to 1–6 (MLRVVE). The chain crosses the membrane as a helical span at residues 7-27 (GIFIFVVISEXVFGVLGNGFI). At 28–42 (GLVNCIDCAKNKLST) the chain is on the cytoplasmic side. The chain crosses the membrane as a helical span at residues 43-63 (IGFILTGLAISRIFLIWIIIT). At 64–100 (DGFIQIFSPDIYASGNLIEYISYFWVIGNQSSMWFAT) the chain is on the extracellular side. Residue asparagine 92 is glycosylated (N-linked (GlcNAc...) asparagine). Residues 101 to 121 (SLSIFYFLKIANFSNYIFLWL) traverse the membrane as a helical segment. Topologically, residues 122–126 (KSRTN) are cytoplasmic. The chain crosses the membrane as a helical span at residues 127–147 (MVLPFMIVFLLISSLLNFAHI). The Extracellular segment spans residues 148 to 179 (AKILNDYKMKNDTVWDLNMYKSEYFIKQILLN). A glycan (N-linked (GlcNAc...) asparagine) is linked at asparagine 158. The chain crosses the membrane as a helical span at residues 180 to 200 (LGVIFFFTLSLITCVFLIISL). Residues 201–227 (WRHNRQMQSNVTGLRDSNTEAHVKAMK) lie on the Cytoplasmic side of the membrane. A helical transmembrane segment spans residues 228-248 (VLISFXILFILYFIGMAIEIS). Over 249–257 (CFTVRENKL) the chain is Extracellular. A helical membrane pass occupies residues 258–278 (LLMFGMTTTAIYPWGHSFILI). Residues 279–307 (LGNSKLKQASLRVLQQLKCCEKRKNLRVT) are Cytoplasmic-facing.

This sequence belongs to the G-protein coupled receptor T2R family.

It localises to the membrane. In terms of biological role, receptor that may play a role in the perception of bitterness and is gustducin-linked. May play a role in sensing the chemical composition of the gastrointestinal content. The activity of this receptor may stimulate alpha gustducin, mediate PLC-beta-2 activation and lead to the gating of TRPM5. This Gorilla gorilla gorilla (Western lowland gorilla) protein is Taste receptor type 2 member 10 (TAS2R10).